Consider the following 107-residue polypeptide: Cytochrome c2 (107 aa).

Residues Cys-14, Cys-17, His-18, and Met-80 each contribute to the heme c site.

It belongs to the cytochrome c family. Binds 1 heme c group covalently per subunit.

Functionally, cytochrome c2 is found mainly in purple, non-sulfur, photosynthetic bacteria where it functions as the electron donor to the oxidized bacteriochlorophyll in the photophosphorylation pathway. However, it may also have a role in the respiratory chain and is found in some non-photosynthetic bacteria. This Rhodoblastus acidophilus (Rhodopseudomonas acidophila) protein is Cytochrome c2.